The chain runs to 158 residues: NADH-quinone oxidoreductase subunit B (158 aa).

[4Fe-4S] cluster contacts are provided by Cys36, Cys37, Cys101, and Cys131.

The protein belongs to the complex I 20 kDa subunit family. As to quaternary structure, NDH-1 is composed of 14 different subunits. Subunits NuoB, C, D, E, F, and G constitute the peripheral sector of the complex. Requires [4Fe-4S] cluster as cofactor.

Its subcellular location is the cell inner membrane. The catalysed reaction is a quinone + NADH + 5 H(+)(in) = a quinol + NAD(+) + 4 H(+)(out). Functionally, NDH-1 shuttles electrons from NADH, via FMN and iron-sulfur (Fe-S) centers, to quinones in the respiratory chain. The immediate electron acceptor for the enzyme in this species is believed to be ubiquinone. Couples the redox reaction to proton translocation (for every two electrons transferred, four hydrogen ions are translocated across the cytoplasmic membrane), and thus conserves the redox energy in a proton gradient. The chain is NADH-quinone oxidoreductase subunit B from Francisella philomiragia subsp. philomiragia (strain ATCC 25017 / CCUG 19701 / FSC 153 / O#319-036).